Consider the following 60-residue polypeptide: U-scutigerotoxin(02)-Tl4a (60 aa).

The protein belongs to the scutigerotoxin-02 family. Contains 3 disulfide bonds. Expressed by the venom gland.

The protein localises to the secreted. The protein is U-scutigerotoxin(02)-Tl4a of Thereuopoda longicornis (Long-legged centipede).